The primary structure comprises 528 residues: G protein-coupled receptor 161 (528 aa).

The Extracellular segment spans residues 1–30 (MSLNSSLGHRKELSNLTEGASDQGGSGVTE). Residues Asn4 and Asn15 are each glycosylated (N-linked (GlcNAc...) asparagine). A helical membrane pass occupies residues 31–51 (FVAIVIITVFVCLGNLVIVIT). Residues 52–64 (LYRKSYLLTLSNK) lie on the Cytoplasmic side of the membrane. Residues 65-85 (FVFSLTLSNFLLSVLVLPFVV) form a helical membrane-spanning segment. At 86–101 (TSSIRREWIFGVVWCN) the chain is on the extracellular side. A disulfide bridge links Cys100 with Cys178. Residue Asn101 is glycosylated (N-linked (GlcNAc...) asparagine). A helical transmembrane segment spans residues 102 to 122 (FSALLYLLISSASMLTLGIIA). Residues 123-143 (VDRYYAVLYPMAYPMKITGNR) are Cytoplasmic-facing. A helical membrane pass occupies residues 144–164 (AVMVLAYIWLHSLIGCLPPLF). Topologically, residues 165-190 (GWSSVEFDEFKWMCVAAWHREPGYTA) are extracellular. A helical membrane pass occupies residues 191–211 (FWQIWCALLPFLVMLVCYGFI). The Cytoplasmic segment spans residues 212-269 (FRVARVKARKVHCGAVVTVEVGVQRTGRKNSSTSTSSSGSRKSAFQGVVYSANQCKAL). Residues 270–290 (VTILVVIGAFMVTWGPYMVVI) form a helical membrane-spanning segment. At 291-306 (TSEALWGKNCVSPTLE) the chain is on the extracellular side. A helical transmembrane segment spans residues 307-327 (TWATWLSFTSAICHPLIYGLW). Over 328–528 (NKTVRKELLG…EGDVLATEQR (201 aa)) the chain is Cytoplasmic.

This sequence belongs to the G-protein coupled receptor 1 family.

The protein localises to the cell projection. It is found in the cilium membrane. It localises to the cell membrane. Functionally, key negative regulator of Shh signaling, which promotes the processing of GLI3 into GLI3R during neural tube development. Recruited by TULP3 and the IFT-A complex to primary cilia and acts as a regulator of the PKA-dependent basal repression machinery in Shh signaling by increasing cAMP levels, leading to promote the PKA-dependent processing of GLI3 into GLI3R and repress the Shh signaling. In presence of SHH, it is removed from primary cilia and is internalized into recycling endosomes, preventing its activity and allowing activation of the Shh signaling. Its ligand is unknown. This Bos taurus (Bovine) protein is G protein-coupled receptor 161 (GPR161).